Reading from the N-terminus, the 222-residue chain is Thiamine-phosphate synthase (222 aa).

Residues 44-48 (QFREK) and Asn-79 contribute to the 4-amino-2-methyl-5-(diphosphooxymethyl)pyrimidine site. Residues Asp-80 and Asp-99 each contribute to the Mg(2+) site. Ser-117 provides a ligand contact to 4-amino-2-methyl-5-(diphosphooxymethyl)pyrimidine. 143-145 (TET) is a binding site for 2-[(2R,5Z)-2-carboxy-4-methylthiazol-5(2H)-ylidene]ethyl phosphate. Lys-146 serves as a coordination point for 4-amino-2-methyl-5-(diphosphooxymethyl)pyrimidine. 2-[(2R,5Z)-2-carboxy-4-methylthiazol-5(2H)-ylidene]ethyl phosphate contacts are provided by residues Gly-175 and 195–196 (IS).

It belongs to the thiamine-phosphate synthase family. As to quaternary structure, monomer. The cofactor is Mg(2+).

It carries out the reaction 2-[(2R,5Z)-2-carboxy-4-methylthiazol-5(2H)-ylidene]ethyl phosphate + 4-amino-2-methyl-5-(diphosphooxymethyl)pyrimidine + 2 H(+) = thiamine phosphate + CO2 + diphosphate. It catalyses the reaction 2-(2-carboxy-4-methylthiazol-5-yl)ethyl phosphate + 4-amino-2-methyl-5-(diphosphooxymethyl)pyrimidine + 2 H(+) = thiamine phosphate + CO2 + diphosphate. The catalysed reaction is 4-methyl-5-(2-phosphooxyethyl)-thiazole + 4-amino-2-methyl-5-(diphosphooxymethyl)pyrimidine + H(+) = thiamine phosphate + diphosphate. The protein operates within cofactor biosynthesis; thiamine diphosphate biosynthesis; thiamine phosphate from 4-amino-2-methyl-5-diphosphomethylpyrimidine and 4-methyl-5-(2-phosphoethyl)-thiazole: step 1/1. Condenses 4-methyl-5-(beta-hydroxyethyl)thiazole monophosphate (THZ-P) and 2-methyl-4-amino-5-hydroxymethyl pyrimidine pyrophosphate (HMP-PP) to form thiamine monophosphate (TMP). Is also able to use the 2-methoxy analog MeO-HMP-PP, as substrate in vitro, but not the 2-trifluoromethyl analog CF(3)-HMP-PP. The polypeptide is Thiamine-phosphate synthase (thiE) (Bacillus subtilis (strain 168)).